We begin with the raw amino-acid sequence, 299 residues long: Non-structural protein V (299 aa).

The interval 40 to 91 (SDNPGQERATYKEEKAGGSGLSKPCLSAIGSTEGGAPRIRGQGSGESDDDTE) is disordered. The interval 110–120 (HYVYDHSGEAV) is interaction with host STAT1. Positions 133-163 (SGLDGDSTLSEGDNESENSDVDIGEPDTEGY) are disordered. Residues 144–160 (GDNESENSDVDIGEPDT) show a composition bias toward acidic residues. Zn(2+) is bound by residues histidine 232, cysteine 251, cysteine 255, cysteine 267, cysteine 269, cysteine 272, cysteine 276, and cysteine 279.

The protein belongs to the paramyxoviruses V protein family. As to quaternary structure, interacts with host IFIH1/MDA5 and DHX58/LGP2; these interactions are involved in the inhibition of the host type I interferon signaling pathway. Interacts with host TYK2; this interaction inhibits the type I interferon signaling pathway without affecting the type II pathway. Interacts with host IRF7; this interaction inhibits IRF7 translocation to the nucleus. Interacts with host CHUK. Interacts with host RELA/p65; this interaction inhibits the nuclear translocation of NF-KappaB. Interacts (via N-terminus) with host STAT1 and JAK1; these interactions inhibit STAT1 phosphorylation by Jak1 and thereby the type I interferon signaling pathway. Interacts (via C-terminus) with host STAT2; this interaction is involved in the inhibition of the host type I interferon signaling pathway. Forms a complex with host PPP1CA and PPP1CC; this interaction prevents dephosphorylation of host IFIH1/MDA5 and leads to the inhibition of the host type I interferon signaling pathway. Interacts with host IRF9; this interaction prevents the binding of IRF9 to STAT2 and thereby the type I interferon signaling pathway. Interacts with host RIGI regulatory protein (via CARDs domain) and host TRIM25 (via SPRY domain); these interactions prevent TRIM25-mediated ubiquitination of RIG-I and disrupts downstream RIG-I signaling.

It localises to the host cytoplasm. Functionally, plays an essential role in the inhibition of host immune response. Prevents the establishment of cellular antiviral state by blocking interferon-alpha/beta (IFN-alpha/beta) production and signaling pathway. Interacts with host IFIH1/MDA5 and DHX58/LGP2 to inhibit the transduction pathway involved in the activation of IFN-beta promoter, thus protecting the virus against cell antiviral state. Blocks the type I interferon signaling pathway by interacting with host TYK2 and thereby inhibiting downstream STAT1 and STAT2 phosphorylation. Blocks the type I interferon signaling pathway by disrupting the RIG-I signaling pathway. Moderately affects the type II interferon signaling. Prevents PP1alpha/gamma-mediated dephosphorylation of host IFIH1/MDA5 and thus blocks its activation. The protein is Non-structural protein V (P/V) of Homo sapiens (Human).